A 163-amino-acid chain; its full sequence is Small ribosomal subunit protein uS9 (163 aa).

Residues 1–11 are compositionally biased toward polar residues; it reads MAENTNDSQVV. The interval 1–40 is disordered; the sequence is MAENTNDSQVVETEEELTNYTTETNAGAGTGTSAIEPGYG. Residues 18 to 27 show a composition bias toward low complexity; the sequence is TNYTTETNAG.

The protein belongs to the universal ribosomal protein uS9 family.

The polypeptide is Small ribosomal subunit protein uS9 (Bifidobacterium longum (strain DJO10A)).